The chain runs to 397 residues: Succinate--CoA ligase [ADP-forming] subunit beta (397 aa).

In terms of domain architecture, ATP-grasp spans 9–254 (KALLKGYGAP…ETEEDAKEIE (246 aa)). ATP contacts are provided by residues K46, 53–55 (GRG), E109, A112, and E117. Residues N209 and D223 each coordinate Mg(2+). Substrate contacts are provided by residues N274 and 331–333 (GIM).

Belongs to the succinate/malate CoA ligase beta subunit family. As to quaternary structure, heterotetramer of two alpha and two beta subunits. Requires Mg(2+) as cofactor.

The enzyme catalyses succinate + ATP + CoA = succinyl-CoA + ADP + phosphate. The catalysed reaction is GTP + succinate + CoA = succinyl-CoA + GDP + phosphate. The protein operates within carbohydrate metabolism; tricarboxylic acid cycle; succinate from succinyl-CoA (ligase route): step 1/1. Succinyl-CoA synthetase functions in the citric acid cycle (TCA), coupling the hydrolysis of succinyl-CoA to the synthesis of either ATP or GTP and thus represents the only step of substrate-level phosphorylation in the TCA. The beta subunit provides nucleotide specificity of the enzyme and binds the substrate succinate, while the binding sites for coenzyme A and phosphate are found in the alpha subunit. This Rhizobium leguminosarum bv. trifolii (strain WSM2304) protein is Succinate--CoA ligase [ADP-forming] subunit beta.